The sequence spans 232 residues: Uracil phosphoribosyltransferase (232 aa).

Position 38-42 (38-42 (KGLVK)) interacts with GTP. Residues arginine 87, arginine 112, and 140 to 148 (DPMIATGST) contribute to the 5-phospho-alpha-D-ribose 1-diphosphate site. Uracil is bound by residues isoleucine 204 and 209–211 (GDA). Aspartate 210 is a 5-phospho-alpha-D-ribose 1-diphosphate binding site.

This sequence belongs to the UPRTase family. Mg(2+) serves as cofactor.

The enzyme catalyses UMP + diphosphate = 5-phospho-alpha-D-ribose 1-diphosphate + uracil. It participates in pyrimidine metabolism; UMP biosynthesis via salvage pathway; UMP from uracil: step 1/1. Its activity is regulated as follows. Allosterically activated by GTP. Functionally, catalyzes the conversion of uracil and 5-phospho-alpha-D-ribose 1-diphosphate (PRPP) to UMP and diphosphate. This is Uracil phosphoribosyltransferase from Pyrococcus furiosus (strain ATCC 43587 / DSM 3638 / JCM 8422 / Vc1).